Here is a 270-residue protein sequence, read N- to C-terminus: Checkpoint signal transducer rad24 (270 aa).

2 positions are modified to phosphoserine: S34 and S66. Residues 242 to 270 (AAAGGNTEGAQENAPSNAPEGEAEPKADA) are disordered.

Belongs to the 14-3-3 family. Homodimer. Binds preferentially to mei2 phosphorylated by ran1/pat1. Binds preferentially to cdc25 phosphorylated by srk1 during G2; the interaction is increased during osmotic stress. Interacts with byr2. Interacts with rad25.

It is found in the cytoplasm. In terms of biological role, acts in cell cycle and stress checkpoint signaling by sequestering signal transducers regulated by the checkpoints. Required for the DNA damage checkpoint that ensures that DNA damage is repaired before mitosis is attempted. During environmental stress, sequesters srk1-phosphorylated cdc25 in the cytoplasm to delay the G2/M transition. Sequesters byr2 in the cytoplasm to prevent its translocation to the plasma membrane. Sequesters ran1/pat1-phosphorylated mei2 from its non-coding RNA activators (including meiRNA), to prevent meiotic induction in vegetative cells and to regulate meiosis I. The chain is Checkpoint signal transducer rad24 from Schizosaccharomyces pombe (strain 972 / ATCC 24843) (Fission yeast).